The following is a 95-amino-acid chain: uncharacterized protein (95 aa).

A helical membrane pass occupies residues Phe-3–Leu-23.

Its subcellular location is the membrane. This is an uncharacterized protein from Methanocaldococcus jannaschii (strain ATCC 43067 / DSM 2661 / JAL-1 / JCM 10045 / NBRC 100440) (Methanococcus jannaschii).